The chain runs to 156 residues: S-ribosylhomocysteine lyase (156 aa).

Fe cation contacts are provided by His54, His58, and Cys123.

It belongs to the LuxS family. As to quaternary structure, homodimer. It depends on Fe cation as a cofactor.

The catalysed reaction is S-(5-deoxy-D-ribos-5-yl)-L-homocysteine = (S)-4,5-dihydroxypentane-2,3-dione + L-homocysteine. In terms of biological role, involved in the synthesis of autoinducer 2 (AI-2) which is secreted by bacteria and is used to communicate both the cell density and the metabolic potential of the environment. The regulation of gene expression in response to changes in cell density is called quorum sensing. Catalyzes the transformation of S-ribosylhomocysteine (RHC) to homocysteine (HC) and 4,5-dihydroxy-2,3-pentadione (DPD). The polypeptide is S-ribosylhomocysteine lyase (Ligilactobacillus salivarius (strain UCC118) (Lactobacillus salivarius)).